The chain runs to 445 residues: C4-dicarboxylate transport protein (445 aa).

The next 8 membrane-spanning stretches (helical) occupy residues 24–44 (VLYVQVLIAIVLGVLLGWVSP), 62–82 (LIKMVIAPIIFCTVVSGIAHI), 105–125 (FALILGLIVGNLVPVGHGLAA), 163–183 (GDILQVLLFAILFGFALMALG), 201–221 (FGVIAIVMKAAPVGAFGAMAF), 237–257 (LVALFYATAALFVFVVLGLIA), 322–342 (IYMTLATLFIAQALGIELTFT), and 370–390 (AGTLAAVNPALVPGMAIVFSI).

This sequence belongs to the dicarboxylate/amino acid:cation symporter (DAACS) (TC 2.A.23) family.

The protein localises to the cell inner membrane. In terms of biological role, responsible for the transport of dicarboxylates such as succinate, fumarate, and malate from the periplasm across the membrane. In Rhodopseudomonas palustris (strain BisB5), this protein is C4-dicarboxylate transport protein.